A 2042-amino-acid chain; its full sequence is Cell adhesion molecule DSCAML1 (2042 aa).

The signal sequence occupies residues Met1–Thr17. Residues Glu18–Lys1592 are Extracellular-facing. Asn28 and Asn78 each carry an N-linked (GlcNAc...) asparagine glycan. Ig-like C2-type domains are found at residues Ser37–Ser107, Pro114–Ser216, Pro227–Thr311, Pro315–Thr403, Pro409–Asn502, Pro507–Ser587, Pro597–Ile686, Pro691–Thr785, and Pro789–Gln886. 5 cysteine pairs are disulfide-bonded: Cys46-Cys102, Cys145-Cys197, Cys248-Cys295, Cys337-Cys387, and Cys430-Cys486. N-linked (GlcNAc...) asparagine glycans are attached at residues Asn369, Asn472, Asn514, Asn557, Asn667, Asn711, Asn750, Asn797, and Asn810. 2 disulfide bridges follow: Cys527–Cys576 and Cys618–Cys670. A disulfide bond links Cys712 and Cys768. A disulfide bond links Cys811 and Cys868. Fibronectin type-III domains follow at residues Pro888–Ala985, Pro990–Asp1089, Pro1094–Asp1190, and Pro1194–Ala1289. Residues Asn927, Asn1083, Asn1145, Asn1163, Asn1276, and Asn1346 are each glycosylated (N-linked (GlcNAc...) asparagine). The Ig-like C2-type 10 domain maps to Glu1279–Asn1368. Residues Cys1312 and Cys1364 are joined by a disulfide bond. Fibronectin type-III domains lie at Pro1384–Arg1478 and Glu1479–Pro1579. N-linked (GlcNAc...) asparagine glycans are attached at residues Asn1493, Asn1532, and Asn1562. Residues Leu1593–Ile1613 form a helical membrane-spanning segment. Residues Arg1614–Val2042 lie on the Cytoplasmic side of the membrane. 4 disordered regions span residues Pro1716–Arg1742, Ser1781–Ala1805, Ser1841–Pro1865, and Pro1940–Val2042. The span at Lys1733–Arg1742 shows a compositional bias: basic residues. Polar residues-rich tracts occupy residues Ser1781–Gln1790 and Ser1841–Ser1863. Over residues Ala1951–Ser1960 the composition is skewed to pro residues. The segment covering Ser1961–Pro1983 has biased composition (low complexity). Pro residues predominate over residues Ala1984–Pro1995. Composition is skewed to low complexity over residues Pro1996–Thr2005 and Gly2023–Ala2034.

In terms of assembly, homodimer; mediates homophilic interactions to promote cell adhesion. SDK1, SDK2, DSCAM and DSCAML1 are expressed in non-overlapping subsets of interneurons and retinal ganglion cells (RGCs) that form synapses in distinct inner plexiform layer (IPL) sublaminae.

The protein localises to the cell membrane. Its subcellular location is the synapse. Functionally, cell adhesion molecule that plays a role in neuronal self-avoidance. Promotes repulsion between specific neuronal processes of either the same cell or the same subtype of cells. Adhesion molecule that promotes lamina-specific synaptic connections in the retina: expressed in specific subsets of interneurons and retinal ganglion cells (RGCs) and promotes synaptic connectivity via homophilic interactions. The protein is Cell adhesion molecule DSCAML1 (DSCAML1) of Gallus gallus (Chicken).